An 87-amino-acid chain; its full sequence is Large ribosomal subunit protein bL27 (87 aa).

Belongs to the bacterial ribosomal protein bL27 family.

The polypeptide is Large ribosomal subunit protein bL27 (Pseudarthrobacter chlorophenolicus (strain ATCC 700700 / DSM 12829 / CIP 107037 / JCM 12360 / KCTC 9906 / NCIMB 13794 / A6) (Arthrobacter chlorophenolicus)).